Reading from the N-terminus, the 366-residue chain is Lipase member J (366 aa).

The Nucleophile role is filled by S141. Active-site charge relay system residues include D312 and H341.

Belongs to the AB hydrolase superfamily. Lipase family.

In Homo sapiens (Human), this protein is Lipase member J (LIPJ).